Consider the following 483-residue polypeptide: Keratin, type II cytoskeletal 8 (483 aa).

Residues 1–25 (MSVRVTQKSYKMSTSGPRAFSSRSF) show a composition bias toward polar residues. Residues 1-43 (MSVRVTQKSYKMSTSGPRAFSSRSFTSGPGARISSSSFSRVGS) form a disordered region. A head region spans residues 1–90 (MSVRVTQKSY…DPNIQAVRTQ (90 aa)). Ser-9 is modified (phosphoserine; by PKC/PRKCE). Lys-11 is covalently cross-linked (Glycyl lysine isopeptide (Lys-Gly) (interchain with G-Cter in SUMO2)). 4 positions are modified to phosphoserine: Ser-13, Ser-15, Ser-21, and Ser-22. Arg-23 is subject to Omega-N-methylarginine. Ser-24 carries the phosphoserine; by PKC/PRKCE modification. Ser-24 carries the phosphoserine modification. Thr-26 is modified (phosphothreonine). A compositionally biased stretch (low complexity) spans 26 to 43 (TSGPGARISSSSFSRVGS). Ser-27 carries the phosphoserine modification. An Omega-N-methylarginine modification is found at Arg-32. Phosphoserine occurs at positions 34, 37, and 39. Omega-N-methylarginine is present on Arg-40. Phosphoserine occurs at positions 43, 44, and 47. Arg-49 carries the asymmetric dimethylarginine; alternate modification. Arg-49 is modified (omega-N-methylarginine; alternate). Ser-51 carries the phosphoserine modification. Residues 91-126 (EKEQIKTLNNKFASFIDKVRFLEQQNKMLETKWSLL) form a coil 1A region. The region spanning 91–402 (EKEQIKTLNN…KLLEGEESRL (312 aa)) is the IF rod domain. N6-malonyllysine is present on Lys-101. Glycyl lysine isopeptide (Lys-Gly) (interchain with G-Cter in SUMO2) cross-links involve residues Lys-122 and Lys-130. The segment at 127 to 143 (QQQKTSRSNMDNMFESY) is linker 1. The tract at residues 144 to 235 (INNLRRQLEA…QIHEEEIREL (92 aa)) is coil 1B. A Glycyl lysine isopeptide (Lys-Gly) (interchain with G-Cter in SUMO1); alternate cross-link involves residue Lys-197. Lys-197 participates in a covalent cross-link: Glycyl lysine isopeptide (Lys-Gly) (interchain with G-Cter in SUMO2); alternate. Lys-207 carries the post-translational modification N6-acetyllysine. A linker 12 region spans residues 236–259 (QSQISDTSVVLSMDNSRSLDMDSI). Residues Ser-253, Ser-258, and Ser-274 each carry the phosphoserine modification. Residues 260–398 (IAEVRAQYEE…ATYRKLLEGE (139 aa)) are coil 2. A necessary for interaction with PNN region spans residues 261–382 (AEVRAQYEEI…EYQELMNVKL (122 aa)). Lys-285 is covalently cross-linked (Glycyl lysine isopeptide (Lys-Gly) (interchain with G-Cter in SUMO2)). Lys-295 participates in a covalent cross-link: Glycyl lysine isopeptide (Lys-Gly) (interchain with G-Cter in SUMO2); alternate. Position 295 is an N6-acetyllysine; alternate (Lys-295). A Glycyl lysine isopeptide (Lys-Gly) (interchain with G-Cter in SUMO2) cross-link involves residue Lys-304. Lys-325 participates in a covalent cross-link: Glycyl lysine isopeptide (Lys-Gly) (interchain with G-Cter in SUMO2); alternate. Position 325 is an N6-acetyllysine; alternate (Lys-325). Lys-393 is covalently cross-linked (Glycyl lysine isopeptide (Lys-Gly) (interchain with G-Cter in SUMO2)). Residues 399 to 483 (ESRLESGMQN…VSESSDIMSK (85 aa)) are tail. Ser-400, Ser-404, Ser-410, Ser-417, Ser-424, Ser-426, and Ser-432 each carry phosphoserine. A Glycyl lysine isopeptide (Lys-Gly) (interchain with G-Cter in SUMO1); alternate cross-link involves residue Lys-472. Lys-472 participates in a covalent cross-link: Glycyl lysine isopeptide (Lys-Gly) (interchain with G-Cter in SUMO2); alternate. Phosphoserine is present on residues Ser-475, Ser-477, Ser-478, and Ser-482.

The protein belongs to the intermediate filament family. Heterotetramer of two type I and two type II keratins. Forms a heterodimer with KRT18. Associates with KRT20. Interacts with PNN. When associated with KRT19, interacts with DMD. Interacts with TCHP. Interacts with APEX1. Interacts with GPER1. Interacts with EPPK1. Interacts with PKP1 and PKP2. Post-translationally, O-glycosylated. O-GlcNAcylation at multiple sites increases solubility, and decreases stability by inducing proteasomal degradation. O-glycosylated (O-GlcNAcylated), in a cell cycle-dependent manner. As to expression, expressed in cardiac and striated muscle. Expressed at Z-lines within the muscle fibers and at Z-line and M-line domains at costameres at the sarcolemmal membrane (at protein level). Observed in coagulating gland, bladder, salivary gland, kidney, spleen, thymus, lung and heart. Also observed in ventral prostate, seminal vesicle and liver where expression increases following castration.

It is found in the cytoplasm. Its subcellular location is the nucleus. The protein resides in the nucleoplasm. It localises to the nucleus matrix. In terms of biological role, together with KRT19, helps to link the contractile apparatus to dystrophin at the costameres of striated muscle. The polypeptide is Keratin, type II cytoskeletal 8 (Krt8) (Rattus norvegicus (Rat)).